We begin with the raw amino-acid sequence, 400 residues long: Bifunctional arginine demethylase and lysyl-hydroxylase psr-1 (400 aa).

A JmjC domain is found at 146-310 (RKTKKLSEDY…LVWPKTVKGR (165 aa)). Threonine 189 is a substrate binding site. Histidine 192 and aspartate 194 together coordinate Fe cation. Residue asparagine 202 coordinates 2-oxoglutarate. Lysine 209 contacts substrate. Histidine 278 serves as a coordination point for Fe cation. Threonine 290 is a binding site for 2-oxoglutarate. Residues 342–400 (DMNESSSDSSSSSSSSDDSSDESDCDDSGRCGGRKRKNDDRSNECPEKMSTTYFQNSLV) form a disordered region. A compositionally biased stretch (low complexity) spans 346 to 358 (SSSDSSSSSSSSD). The span at 378-388 (KNDDRSNECPE) shows a compositional bias: basic and acidic residues. Residues 390 to 400 (MSTTYFQNSLV) show a composition bias toward polar residues.

The protein belongs to the JMJD6 family. Interacts with ced-5 and ced-12. It depends on Fe(2+) as a cofactor.

The protein resides in the nucleus. In terms of biological role, dioxygenase that can both act as a histone arginine demethylase and a lysyl-hydroxylase. This chain is Bifunctional arginine demethylase and lysyl-hydroxylase psr-1 (psr-1), found in Caenorhabditis elegans.